A 467-amino-acid chain; its full sequence is Envelope glycoprotein M (467 aa).

Over 1–32 (MGRRAPRGSPEAAPGADVAPGARAAWWVWCVQ) the chain is Intravirion. A helical membrane pass occupies residues 33-53 (VATFIVSAICVVGLLVLASVF). The Virion surface portion of the chain corresponds to 54-90 (RDRFPCLYAPATSYAKANATVEVRGGVAVPLRLDTQS). The helical transmembrane segment at 91 to 111 (LLATYAITSTLLLAAAVYAAV) threads the bilayer. Residues 112 to 137 (GAVTSRYERALDAARRLAAARMAMPH) lie on the Intravirion side of the membrane. Residues 138 to 158 (ATLIAGNVCAWLLQITVLLLA) traverse the membrane as a helical segment. Over 159–163 (HRISQ) the chain is Virion surface. Residues 164 to 184 (LAHLIYVLHFACLVYLAAHFC) traverse the membrane as a helical segment. Residues 185-220 (TRGVLSGTYLRQVHGLIDPAPTHHRIVGPVRAVMTN) lie on the Intravirion side of the membrane. The chain crosses the membrane as a helical span at residues 221–241 (ALLLGTLLCTAAAAVSLNTIA). The Virion surface segment spans residues 242–250 (ALNFNFSAP). A helical transmembrane segment spans residues 251–271 (SMLICLTTLFALLVVSLLLVV). Topologically, residues 272–280 (EGVLCHYVR) are intravirion. Residues 281-301 (VLVGPHLGAIAATGIVGLACE) form a helical membrane-spanning segment. Residues 302 to 318 (HYHTGGYYVVEQQWPGA) are Virion surface-facing. The helical transmembrane segment at 319–339 (QTGVRVALALVAAFALAMAVL) threads the bilayer. The Intravirion portion of the chain corresponds to 340–467 (RCTRAYLYHR…EPVYSTVRRW (128 aa)). Residues 371 to 381 (RRVRSSMRGSR) are compositionally biased toward basic residues. 2 disordered regions span residues 371 to 395 (RRVRSSMRGSRRGGPPGDPGYAETP) and 432 to 459 (VQRPGPVPDAEPIYDTVEGYAPRSAGEP).

It belongs to the herpesviridae glycoprotein M family. In terms of assembly, interacts (via N-terminus) with gN (via N-terminus). The gM-gN heterodimer forms the gCII complex.

It localises to the virion membrane. The protein localises to the host Golgi apparatus. Its subcellular location is the host trans-Golgi network. The protein resides in the host endosome membrane. It is found in the host nucleus inner membrane. Functionally, envelope glycoprotein important for virion assembly and egress. Plays a role in the correct incorporation of gH-gL into virion membrane. Directs the glycoprotein N (gN) to the host trans-Golgi network. This chain is Envelope glycoprotein M, found in Human herpesvirus 2 (strain HG52) (HHV-2).